We begin with the raw amino-acid sequence, 494 residues long: Nuclear distribution protein PAC1 (494 aa).

In terms of domain architecture, LisH spans 14 to 46 (QKNELDKSVLRYLNWNYKQTVRHEHAQDYESVR). The stretch at 90 to 123 (NSIVRLQKKIIELEQNTETLVSQIKDLNTQVSEL) forms a coiled coil. WD repeat units lie at residues 153 to 192 (NVES…IPLA), 196 to 244 (SHTK…CKFQ), 251 to 292 (GHEH…SLKT), 295 to 334 (PHSQ…SVGT), 347 to 395 (HFIE…LMAH), 415 to 454 (GHLS…HVWE), and 457 to 492 (HTGF…SNVF).

Belongs to the WD repeat LIS1/nudF family. In terms of assembly, self-associates. Interacts with NDL1 and dynein.

The protein resides in the cytoplasm. Its subcellular location is the cytoskeleton. It is found in the spindle pole. Functionally, positively regulates the activity of the minus-end directed microtubule motor protein dynein. Plays a central role in positioning the mitotic spindle at the bud neck during cell division. Targets cytoplasmic dynein to microtubule plus ends, thereby promoting dynein-mediated microtubule sliding along the bud cortex and consequently the movement of the mitotic spindle to the bud neck. The protein is Nuclear distribution protein PAC1 of Saccharomyces cerevisiae (strain Lalvin EC1118 / Prise de mousse) (Baker's yeast).